We begin with the raw amino-acid sequence, 512 residues long: Lysine--tRNA ligase (512 aa).

The Mg(2+) site is built by Glu-422 and Glu-429.

The protein belongs to the class-II aminoacyl-tRNA synthetase family. In terms of assembly, homodimer. Requires Mg(2+) as cofactor.

The protein resides in the cytoplasm. It carries out the reaction tRNA(Lys) + L-lysine + ATP = L-lysyl-tRNA(Lys) + AMP + diphosphate. This chain is Lysine--tRNA ligase, found in Paraburkholderia phymatum (strain DSM 17167 / CIP 108236 / LMG 21445 / STM815) (Burkholderia phymatum).